The primary structure comprises 235 residues: RNA polymerase sigma factor SigI7 (235 aa).

A Polymerase core binding motif is present at residues 49–62 (DELSIALMAFVETI). The H-T-H motif DNA-binding region spans 191 to 210 (VAEIEQSLKIPRKTIERARK).

It belongs to the sigma-70 factor family. SigI subfamily. Interacts with RsgI7.

It is found in the cytoplasm. With respect to regulation, negatively regulated by the anti-sigma-I factor RsgI7. Functionally, sigma factors are initiation factors that promote the attachment of RNA polymerase to specific initiation sites and are then released. The polypeptide is RNA polymerase sigma factor SigI7 (Acetivibrio thermocellus (strain ATCC 27405 / DSM 1237 / JCM 9322 / NBRC 103400 / NCIMB 10682 / NRRL B-4536 / VPI 7372) (Clostridium thermocellum)).